The primary structure comprises 169 residues: S-ribosylhomocysteine lyase (169 aa).

Residues His-54, His-58, and Cys-128 each coordinate Fe cation.

This sequence belongs to the LuxS family. As to quaternary structure, homodimer. The cofactor is Fe cation.

It carries out the reaction S-(5-deoxy-D-ribos-5-yl)-L-homocysteine = (S)-4,5-dihydroxypentane-2,3-dione + L-homocysteine. In terms of biological role, involved in the synthesis of autoinducer 2 (AI-2) which is secreted by bacteria and is used to communicate both the cell density and the metabolic potential of the environment. The regulation of gene expression in response to changes in cell density is called quorum sensing. Catalyzes the transformation of S-ribosylhomocysteine (RHC) to homocysteine (HC) and 4,5-dihydroxy-2,3-pentadione (DPD). This Shewanella sediminis (strain HAW-EB3) protein is S-ribosylhomocysteine lyase.